The primary structure comprises 747 residues: Protein tyrosine phosphatase domain-containing protein 1 (747 aa).

Residues 1 to 36 (MAAGVLPQNEDPYSTLVNSSGHAAHMDENSGRPAPK) form a disordered region. Polar residues predominate over residues 11–21 (DPYSTLVNSSG). Residues 82-253 (YSSWVTDNIL…LAPLRNIFSC (172 aa)) form the Tyrosine-protein phosphatase domain. Cys-190 acts as the Phosphocysteine intermediate in catalysis. A phosphoserine mark is found at Ser-392, Ser-394, and Ser-543. The segment at 549–570 (SSPKAQFPHGQETQDSTDLSEA) is disordered.

Belongs to the protein-tyrosine phosphatase family. Non-receptor class PTPDC1 subfamily.

May play roles in cilia formation and/or maintenance. In Mus musculus (Mouse), this protein is Protein tyrosine phosphatase domain-containing protein 1 (Ptpdc1).